The chain runs to 421 residues: Imidazolonepropionase (421 aa).

Residues histidine 81 and histidine 83 each coordinate Fe(3+). Zn(2+) contacts are provided by histidine 81 and histidine 83. The 4-imidazolone-5-propanoate site is built by arginine 90, tyrosine 153, and histidine 186. Tyrosine 153 is an N-formimidoyl-L-glutamate binding site. Histidine 251 contributes to the Fe(3+) binding site. Histidine 251 contacts Zn(2+). 4-imidazolone-5-propanoate is bound at residue glutamate 254. Residue aspartate 326 coordinates Fe(3+). Residue aspartate 326 coordinates Zn(2+). Residues asparagine 328 and glycine 330 each coordinate N-formimidoyl-L-glutamate. Residue serine 331 participates in 4-imidazolone-5-propanoate binding.

The protein belongs to the metallo-dependent hydrolases superfamily. HutI family. The cofactor is Zn(2+). Fe(3+) serves as cofactor.

The protein localises to the cytoplasm. It catalyses the reaction 4-imidazolone-5-propanoate + H2O = N-formimidoyl-L-glutamate. Its pathway is amino-acid degradation; L-histidine degradation into L-glutamate; N-formimidoyl-L-glutamate from L-histidine: step 3/3. Its function is as follows. Catalyzes the hydrolytic cleavage of the carbon-nitrogen bond in imidazolone-5-propanoate to yield N-formimidoyl-L-glutamate. It is the third step in the universal histidine degradation pathway. The sequence is that of Imidazolonepropionase from Streptococcus pyogenes serotype M1.